The primary structure comprises 366 residues: Leucine-rich repeat-containing protein 58 (366 aa).

A Phosphoserine modification is found at S19. 9 LRR repeats span residues 40 to 61 (ALLRLLLPYNRLTSLPRALGGG), 64 to 86 (HLQLLDVSGNSLTALGPELLTLS), 87 to 108 (GLRTLLARNNRLGGPGSLPKGL), 116 to 138 (SLQVLNLSGNCFQELPASLLELR), 139 to 161 (ALQTLSLGGNQLQSIPAEIENLR), 162 to 184 (SLECLYLGGNFIKEIPPELANLP), 185 to 206 (SLNYLVLCDNKIQSVPPQLSQL), 208 to 229 (SLRSLSLHNNLLTYLPREILNL), and 231 to 251 (HLEELSLRGNPLVVRFVRDLT). Residues 337 to 346 (ASHSSTSQSE) show a composition bias toward low complexity. The tract at residues 337–356 (ASHSSTSQSESDSEDEASVA) is disordered.

The protein is Leucine-rich repeat-containing protein 58 (Lrrc58) of Mus musculus (Mouse).